Reading from the N-terminus, the 695-residue chain is Nucleoprotein (695 aa).

Coiled coils occupy residues 316 to 341 (VNVG…RRHE) and 372 to 399 (QTLA…VEDQ). The interval 424–611 (QARPMNRPTA…SPSAPQEDTR (188 aa)) is disordered. A compositionally biased stretch (basic and acidic residues) spans 438-447 (VDDKIEHEST). Composition is skewed to polar residues over residues 495 to 505 (RQSQDLNNSQG) and 537 to 552 (TTDS…SDNE). Positions 603–606 (PSAP) match the PTAP/PSAP motif motif.

Belongs to the filoviruses nucleoprotein family. In terms of assembly, homooligomer. Homomultimerizes to form the nucleocapsid. Binds to viral genomic RNA. Interacts with VP35 and VP30 to form the nucleocapsid. Also interacts with VP24 and VP40. Phosphorylated.

The protein localises to the virion. It localises to the host cytoplasm. In terms of biological role, encapsidates the genome, protecting it from nucleases. The encapsidated genomic RNA is termed the nucleocapsid and serves as template for transcription and replication. During replication, encapsidation by NP is coupled to RNA synthesis and all replicative products are resistant to nucleases. This chain is Nucleoprotein (NP), found in Chlorocebus aethiops (Green monkey).